A 380-amino-acid polypeptide reads, in one-letter code: Queuine tRNA-ribosyltransferase (380 aa).

Asp-96 serves as the catalytic Proton acceptor. Substrate is bound by residues 96-100, Asp-150, Gln-193, and Gly-220; that span reads DSGGF. The segment at 251 to 257 is RNA binding; it reads GVGAPDS. Residue Asp-270 is the Nucleophile of the active site. The RNA binding; important for wobble base 34 recognition stretch occupies residues 275–279; that stretch reads TRIAR. Positions 308, 310, 313, and 339 each coordinate Zn(2+).

It belongs to the queuine tRNA-ribosyltransferase family. As to quaternary structure, homodimer. Within each dimer, one monomer is responsible for RNA recognition and catalysis, while the other monomer binds to the replacement base PreQ1. Zn(2+) serves as cofactor.

It carries out the reaction 7-aminomethyl-7-carbaguanine + guanosine(34) in tRNA = 7-aminomethyl-7-carbaguanosine(34) in tRNA + guanine. It participates in tRNA modification; tRNA-queuosine biosynthesis. Catalyzes the base-exchange of a guanine (G) residue with the queuine precursor 7-aminomethyl-7-deazaguanine (PreQ1) at position 34 (anticodon wobble position) in tRNAs with GU(N) anticodons (tRNA-Asp, -Asn, -His and -Tyr). Catalysis occurs through a double-displacement mechanism. The nucleophile active site attacks the C1' of nucleotide 34 to detach the guanine base from the RNA, forming a covalent enzyme-RNA intermediate. The proton acceptor active site deprotonates the incoming PreQ1, allowing a nucleophilic attack on the C1' of the ribose to form the product. After dissociation, two additional enzymatic reactions on the tRNA convert PreQ1 to queuine (Q), resulting in the hypermodified nucleoside queuosine (7-(((4,5-cis-dihydroxy-2-cyclopenten-1-yl)amino)methyl)-7-deazaguanosine). This Streptococcus pyogenes serotype M49 (strain NZ131) protein is Queuine tRNA-ribosyltransferase.